Reading from the N-terminus, the 142-residue chain is Inner membrane protein YqaA (142 aa).

The Cytoplasmic portion of the chain corresponds to 1–2 (MS). Residues 3–23 (EALSLFSLFASSFLSATLLPG) traverse the membrane as a helical segment. Residues 24–26 (NSE) lie on the Periplasmic side of the membrane. Residues 27–47 (VVLVAMLLSGISHPWVLVLTA) traverse the membrane as a helical segment. The Cytoplasmic portion of the chain corresponds to 48–86 (TMGNSLGGLTNVILGRFFPLRKTSRWQEKATGWLKRYGA). The chain crosses the membrane as a helical span at residues 87 to 107 (VTLLLSWMPVVGDLLCLLAGW). The Periplasmic segment spans residues 108–142 (MRISWGPVIFFLCLGKALRYVAVAAATVQGMMWWH).

It to H.influenzae HI_0489.

Its subcellular location is the cell inner membrane. The sequence is that of Inner membrane protein YqaA (yqaA) from Escherichia coli (strain K12).